The primary structure comprises 72 residues: Large ribosomal subunit protein uL29 (72 aa).

Belongs to the universal ribosomal protein uL29 family.

The sequence is that of Large ribosomal subunit protein uL29 from Microcystis aeruginosa (strain NIES-843 / IAM M-2473).